A 382-amino-acid chain; its full sequence is L-lysine 4-hydroxylase (382 aa).

Fe cation contacts are provided by His182, Glu184, and His318.

This sequence belongs to the clavaminate synthase family. The cofactor is Fe(2+).

The enzyme catalyses L-lysine + 2-oxoglutarate + O2 = (4R)-4-hydroxy-L-lysine + succinate + CO2. Alpha-ketoglutarate-dependent dioxygenase that in vitro catalyzes the regio- and stereoselective hydroxylation of L-lysine, leading to (4R)-4-hydroxy-L-lysine. Cannot use D-lysine or L-ornithine as substrate. The protein is L-lysine 4-hydroxylase of Chitinophaga pinensis (strain ATCC 43595 / DSM 2588 / LMG 13176 / NBRC 15968 / NCIMB 11800 / UQM 2034).